The primary structure comprises 532 residues: D-arabinono-1,4-lactone oxidase (532 aa).

The FAD-binding PCMH-type domain occupies 25 to 199; that stretch reads YSARPRLYFQ…VRATIRVVPA (175 aa). Position 62 is a pros-8alpha-FAD histidine (His-62).

It belongs to the oxygen-dependent FAD-linked oxidoreductase family. It depends on FAD as a cofactor.

Its subcellular location is the mitochondrion membrane. The catalysed reaction is D-arabinono-1,4-lactone + O2 = dehydro-D-arabinono-1,4-lactone + H2O2 + H(+). It participates in cofactor biosynthesis; D-erythroascorbate biosynthesis; dehydro-D-arabinono-1,4-lactone from D-arabinose: step 2/2. This Eremothecium gossypii (strain ATCC 10895 / CBS 109.51 / FGSC 9923 / NRRL Y-1056) (Yeast) protein is D-arabinono-1,4-lactone oxidase (ALO1).